The primary structure comprises 374 residues: Arf-GAP with dual PH domain-containing protein 1 (374 aa).

The 120-residue stretch at 7 to 126 (RAVLELLQRP…EFIYPEKQEP (120 aa)) folds into the Arf-GAP domain. Residues 21-44 (CADCGAPDPDWASYTLGVFICLSC) form a C4-type zinc finger. Ser-87 carries the post-translational modification Phosphoserine; by PKC. PH domains lie at 129–230 (AGYR…AARF) and 252–356 (NYLK…KAVD). Residue Lys-272 is modified to N6-acetyllysine. Position 276 is a phosphothreonine; by PKC (Thr-276).

Interacts with PRKCA, PRKCI and PRKCZ. Interacts with the N-terminal region of PRKD1. Post-translationally, phosphorylated by PRKCA, PRKCI, PRKCZ and PRKD1 in vitro. As to expression, expressed at highest levels in brain and at lower levels in peripheral blood leukocytes.

It localises to the nucleus. Its subcellular location is the cytoplasm. GTPase-activating protein for the ADP ribosylation factor family. Binds phosphatidylinositol 3,4,5-trisphosphate (PtdInsP3) and inositol 1,3,4,5-tetrakisphosphate (InsP4). Regulates the incorporation of CD63 and CD9 into multivesicular bodies. In Homo sapiens (Human), this protein is Arf-GAP with dual PH domain-containing protein 1 (ADAP1).